Here is a 180-residue protein sequence, read N- to C-terminus: Cell number regulator 7 (180 aa).

A helical transmembrane segment spans residues 80-102; sequence AAAGAIYTLLACFTGFQCHWIYS.

This sequence belongs to the cornifelin family. In terms of tissue distribution, expressed in roots, leaves, immature ears and silks. Detected preferentially in silks.

The protein localises to the membrane. This chain is Cell number regulator 7 (CNR7), found in Zea mays (Maize).